Consider the following 184-residue polypeptide: UPF0398 protein BC_1561 (184 aa).

Belongs to the UPF0398 family.

This is UPF0398 protein BC_1561 from Bacillus cereus (strain ATCC 14579 / DSM 31 / CCUG 7414 / JCM 2152 / NBRC 15305 / NCIMB 9373 / NCTC 2599 / NRRL B-3711).